The sequence spans 119 residues: NADH-quinone oxidoreductase subunit A (119 aa).

A run of 3 helical transmembrane segments spans residues 9 to 29 (VLLF…LGYV), 63 to 83 (LVAI…PWAV), and 88 to 108 (VGMA…VGFA).

Belongs to the complex I subunit 3 family. In terms of assembly, NDH-1 is composed of 14 different subunits. Subunits NuoA, H, J, K, L, M, N constitute the membrane sector of the complex.

It localises to the cell inner membrane. The catalysed reaction is a quinone + NADH + 5 H(+)(in) = a quinol + NAD(+) + 4 H(+)(out). In terms of biological role, NDH-1 shuttles electrons from NADH, via FMN and iron-sulfur (Fe-S) centers, to quinones in the respiratory chain. The immediate electron acceptor for the enzyme in this species is believed to be ubiquinone. Couples the redox reaction to proton translocation (for every two electrons transferred, four hydrogen ions are translocated across the cytoplasmic membrane), and thus conserves the redox energy in a proton gradient. The protein is NADH-quinone oxidoreductase subunit A of Verminephrobacter eiseniae (strain EF01-2).